The chain runs to 67 residues: Kappa-conotoxin-like 1 (67 aa).

Residues 1-26 form the signal peptide; sequence MMFRLTSVSCFLLVIACLNLFQVVLT. Intrachain disulfides connect C29–C43, C36–C48, C42–C51, and C47–C55. I59 carries the isoleucine amide modification. The propeptide occupies 63–67; that stretch reads ATFQE.

The protein belongs to the conotoxin I2 superfamily. As to expression, expressed by the venom duct.

The protein localises to the secreted. Its function is as follows. Inhibits the vertebrate voltage-gated potassium channels Kv1.1/KCNA1 and Kv1.3/KCNA3. The chain is Kappa-conotoxin-like 1 from Conus vexillum (Flag cone).